A 1050-amino-acid polypeptide reads, in one-letter code: Sucrose-phosphate synthase 4 (1050 aa).

The tract at residues 134 to 167 (QGRNDAEEDLLSELSEGEKDKNDGEKEKSEVVTT) is disordered. Ser-148 carries the phosphoserine modification. The span at 149-163 (EGEKDKNDGEKEKSE) shows a compositional bias: basic and acidic residues. Ser-180 carries the post-translational modification Phosphoserine.

Belongs to the glycosyltransferase 1 family. In terms of assembly, homodimer or homotetramer.

The catalysed reaction is beta-D-fructose 6-phosphate + UDP-alpha-D-glucose = sucrose 6(F)-phosphate + UDP + H(+). It participates in glycan biosynthesis; sucrose biosynthesis; sucrose from D-fructose 6-phosphate and UDP-alpha-D-glucose: step 1/2. With respect to regulation, activity is regulated by phosphorylation and moderated by concentration of metabolites and light. Functionally, plays a role in photosynthetic sucrose synthesis by catalyzing the rate-limiting step of sucrose biosynthesis from UDP-glucose and fructose- 6-phosphate. Involved in the regulation of carbon partitioning in the leaves of plants. May regulate the synthesis of sucrose and therefore play a major role as a limiting factor in the export of photoassimilates out of the leaf. Plays a role for sucrose availability that is essential for plant growth and fiber elongation. This chain is Sucrose-phosphate synthase 4, found in Arabidopsis thaliana (Mouse-ear cress).